A 383-amino-acid chain; its full sequence is MAQQSQRPISNRHISLLNRNGLILLLLLALFVILGVFLPLTKSSLFMFPNTTSSSLSPSSSLSVSDWRDYSLAQAVKFVAKNETVIVCAVSYPFLPFLNNWLISISRQKHQEKVLVIAEDYATLYKVNEKWPGHAVLIPPALDPQSAHKFGSQGFFNLTSRRPQHLLNILELGYNVMYNDVDMVWLQDPFDYLQGSYDAYFMDDMIAIKPLNHSHDLPPLSRSGVTYVCSCMIFLRSTDGGKLLMKTWVEEIQAQPWNNTQAKKPHDQPAFNRALHKTANQVKVYLLPQSAFPSGGLYFRNETWVNETRGKHVIVHNNYIIGYDKKMKRFQDFSLWLVDDHALESPLGKLEIYQEQNTTTEGKNLTKIVRKQRKNRGKKHKLP.

Residues 1–20 (MAQQSQRPISNRHISLLNRN) are Cytoplasmic-facing. A helical; Signal-anchor for type II membrane protein membrane pass occupies residues 21-41 (GLILLLLLALFVILGVFLPLT). At 42-383 (KSSLFMFPNT…KNRGKKHKLP (342 aa)) the chain is on the lumenal side. Residues asparagine 50, asparagine 82, and asparagine 157 are each glycosylated (N-linked (GlcNAc...) asparagine). Positions 180–182 (DVD) match the DXD motif motif. N-linked (GlcNAc...) asparagine glycosylation is found at asparagine 212, asparagine 258, asparagine 301, asparagine 306, asparagine 357, and asparagine 364.

It belongs to the glycosyltransferase 77 family. The cofactor is Mn(2+). Mg(2+) is required as a cofactor. In terms of processing, glycosylated. As to expression, expressed around trichome support cells in the adaxial epidermis of rosette leaves, in cauline leaves, petals and both the proximal and distal ends of siliques.

The protein localises to the golgi apparatus membrane. Its function is as follows. Catalyzes the transfer of D-xylose from UDP-alpha-D-xylose onto L-fucose. Probably involved in the biosynthesis of rhamnogalacturonan II (RG-II) through xylosylation of the internal fucose moiety of the A-chain of RG-II, a structurally complex pectic polysaccharide of the primary cell wall. RG-II is essential for the cell wall integrity of rapidly growing tissues such as roots and pollen tube growth and elongation. The sequence is that of UDP-D-xylose:L-fucose alpha-1,3-D-xylosyltransferase 3 from Arabidopsis thaliana (Mouse-ear cress).